The chain runs to 314 residues: Protein YdgH (314 aa).

The signal sequence occupies residues 1 to 19; the sequence is MKLKNTLLASALLSAMAFS.

The protein to E.coli YjfY.

The sequence is that of Protein YdgH (ydgH) from Escherichia coli (strain K12).